Reading from the N-terminus, the 389-residue chain is Alpha-2B adrenergic receptor (389 aa).

The chain crosses the membrane as a helical span at residues 1-25 (AIAAVITFLILFTIFGNALVILAVL). The Cytoplasmic segment spans residues 26–36 (TSRSLRAPQNL). A helical transmembrane segment spans residues 37 to 62 (FLVSLAAADILVATLIIPFSLANELL). At 63-72 (GYWYFRRTWC) the chain is on the extracellular side. C72 and C151 are disulfide-bonded. A helical membrane pass occupies residues 73–95 (EVYLALDVLFCTSSIVHLCAISL). Over 96–117 (DRYWAVTRALEYNTKRTPRRIK) the chain is Cytoplasmic. A helical membrane pass occupies residues 118 to 140 (CIILTVWLIAAVISLPPLIYKGD). Residues 141–156 (QGPQPRGRPQCKLNQE) are Extracellular-facing. The chain crosses the membrane as a helical span at residues 157-180 (AWYILASSIGSFFAPCLIMILVYL). Topologically, residues 181–363 (RIYLIAKRSH…LTREKRFTFV (183 aa)) are cytoplasmic. Disordered stretches follow at residues 194–216 (PRAK…AGAS) and 233–320 (EANG…PLQQ). The segment covering 196 to 205 (AKGGPGGGGS) has biased composition (gly residues). Low complexity predominate over residues 255–267 (PALPSSWPALPSS). Acidic residues predominate over residues 280–302 (LEEEAEEEEEEEEEEEEGEEECE). Over residues 303 to 320 (PQALPASPASACSPPLQQ) the composition is skewed to low complexity. A helical membrane pass occupies residues 364 to 387 (LAVVIGVFVLCWFPFFFSYSLGAI). The Extracellular segment spans residues 388–389 (CP).

This sequence belongs to the G-protein coupled receptor 1 family. Adrenergic receptor subfamily. ADRA2B sub-subfamily. In terms of assembly, interacts with RAB26. Interacts with PPP1R9B. Interacts with GGA1, GGA2 and GGA3.

The protein localises to the cell membrane. Alpha-2 adrenergic receptors mediate the catecholamine-induced inhibition of adenylate cyclase through the action of G proteins. The chain is Alpha-2B adrenergic receptor (ADRA2B) from Equus caballus (Horse).